The chain runs to 261 residues: Type II restriction enzyme Sau96I (261 aa).

In terms of assembly, monomer.

It catalyses the reaction Endonucleolytic cleavage of DNA to give specific double-stranded fragments with terminal 5'-phosphates.. Functionally, a P subtype restriction enzyme that recognizes the double-stranded sequence 5'-GGNCC-3' and cleaves after G-1. The chain is Type II restriction enzyme Sau96I from Staphylococcus aureus.